The following is a 497-amino-acid chain: Protein nucleotidyltransferase YdiU (497 aa).

Residues glycine 92, glycine 94, arginine 95, lysine 114, aspartate 126, glycine 127, arginine 177, and arginine 184 each coordinate ATP. Aspartate 261 serves as the catalytic Proton acceptor. Residues asparagine 262 and aspartate 271 each contribute to the Mg(2+) site. Position 271 (aspartate 271) interacts with ATP.

This sequence belongs to the SELO family. Mg(2+) serves as cofactor. Requires Mn(2+) as cofactor.

The catalysed reaction is L-seryl-[protein] + ATP = 3-O-(5'-adenylyl)-L-seryl-[protein] + diphosphate. The enzyme catalyses L-threonyl-[protein] + ATP = 3-O-(5'-adenylyl)-L-threonyl-[protein] + diphosphate. It carries out the reaction L-tyrosyl-[protein] + ATP = O-(5'-adenylyl)-L-tyrosyl-[protein] + diphosphate. It catalyses the reaction L-histidyl-[protein] + UTP = N(tele)-(5'-uridylyl)-L-histidyl-[protein] + diphosphate. The catalysed reaction is L-seryl-[protein] + UTP = O-(5'-uridylyl)-L-seryl-[protein] + diphosphate. The enzyme catalyses L-tyrosyl-[protein] + UTP = O-(5'-uridylyl)-L-tyrosyl-[protein] + diphosphate. Nucleotidyltransferase involved in the post-translational modification of proteins. It can catalyze the addition of adenosine monophosphate (AMP) or uridine monophosphate (UMP) to a protein, resulting in modifications known as AMPylation and UMPylation. The chain is Protein nucleotidyltransferase YdiU from Bordetella petrii (strain ATCC BAA-461 / DSM 12804 / CCUG 43448).